The chain runs to 65 residues: Large ribosomal subunit protein uL30 (65 aa).

It belongs to the universal ribosomal protein uL30 family. Part of the 50S ribosomal subunit.

This Desulfosudis oleivorans (strain DSM 6200 / JCM 39069 / Hxd3) (Desulfococcus oleovorans) protein is Large ribosomal subunit protein uL30.